A 363-amino-acid polypeptide reads, in one-letter code: S-adenosylmethionine:tRNA ribosyltransferase-isomerase (363 aa).

The protein belongs to the QueA family. In terms of assembly, monomer.

The protein localises to the cytoplasm. It catalyses the reaction 7-aminomethyl-7-carbaguanosine(34) in tRNA + S-adenosyl-L-methionine = epoxyqueuosine(34) in tRNA + adenine + L-methionine + 2 H(+). The protein operates within tRNA modification; tRNA-queuosine biosynthesis. Functionally, transfers and isomerizes the ribose moiety from AdoMet to the 7-aminomethyl group of 7-deazaguanine (preQ1-tRNA) to give epoxyqueuosine (oQ-tRNA). This chain is S-adenosylmethionine:tRNA ribosyltransferase-isomerase, found in Brucella melitensis biotype 2 (strain ATCC 23457).